A 1186-amino-acid polypeptide reads, in one-letter code: ATP-dependent helicase/deoxyribonuclease subunit B (1186 aa).

A UvrD-like helicase ATP-binding domain is found at 1–308; that stretch reads MSVKFLLGRA…AHLEKEWGKN (308 aa). An ATP-binding site is contributed by 8 to 15; that stretch reads GRAGSGKT. The UvrD-like helicase C-terminal domain maps to 288–620; the sequence is SLPRFKDNPA…LVGTADRSRY (333 aa). Positions 822, 1144, 1147, and 1153 each coordinate [4Fe-4S] cluster.

It belongs to the helicase family. AddB/RexB type 1 subfamily. As to quaternary structure, heterodimer of AddA and AddB. Requires Mg(2+) as cofactor. [4Fe-4S] cluster serves as cofactor.

Functionally, the heterodimer acts as both an ATP-dependent DNA helicase and an ATP-dependent, dual-direction single-stranded exonuclease. Recognizes the chi site generating a DNA molecule suitable for the initiation of homologous recombination. The AddB subunit has 5' -&gt; 3' nuclease activity but not helicase activity. The polypeptide is ATP-dependent helicase/deoxyribonuclease subunit B (Natranaerobius thermophilus (strain ATCC BAA-1301 / DSM 18059 / JW/NM-WN-LF)).